Reading from the N-terminus, the 270-residue chain is Protein MGF 110-1L (270 aa).

A signal peptide spans 1 to 26; sequence MLGLQIITLLFIPTLLYAYELEPLER. One copy of the A repeat lies at 1-146; it reads MLGLQIITLL…YIRKRSLQTI (146 aa). Residue asparagine 75 is glycosylated (N-linked (GlcNAc...) asparagine; by host). Transmembrane regions (helical) follow at residues 118–138 and 146–166; these read WQKLLTYGFYLVGCVLVVNYI and IVYLLVLLVIFFLLSQLMLYR. The B repeat unit spans residues 147 to 270; that stretch reads VYLLVLLVIF…DNLMKKQDIM (124 aa).

Belongs to the asfivirus MGF 110 family.

It localises to the membrane. In terms of biological role, plays a role in virus cell tropism, and may be required for efficient virus replication in macrophages. This is Protein MGF 110-1L from Ornithodoros (relapsing fever ticks).